The sequence spans 483 residues: Regulatory protein ViaA (483 aa).

It belongs to the ViaA family. As to quaternary structure, homodimer. Interacts with RavA.

The protein resides in the cytoplasm. Functionally, component of the RavA-ViaA chaperone complex, which may act on the membrane to optimize the function of some of the respiratory chains. ViaA stimulates the ATPase activity of RavA. The sequence is that of Regulatory protein ViaA from Salmonella dublin (strain CT_02021853).